The primary structure comprises 3753 residues: Intermembrane lipid transfer protein VPS13C (3753 aa).

In terms of domain architecture, Chorein N-terminal spans 3 to 116 (LESVVADLLN…LQDVKQKELS (114 aa)). Phosphoserine is present on serine 132. Basic residues predominate over residues 150 to 164 (GRKRKKHKKHFKKPF). The disordered stretch occupies residues 150–176 (GRKRKKHKKHFKKPFKGLDRSKDKPKE). The segment covering 165-176 (KGLDRSKDKPKE) has biased composition (basic and acidic residues). Residue threonine 614 is modified to Phosphothreonine. A Phosphoserine modification is found at serine 619. Threonine 624 is subject to Phosphothreonine. Phosphoserine occurs at positions 737, 842, 872, and 874. The FFAT signature appears at 877-883 (EYFDAED). 2 positions are modified to phosphoserine: serine 1979 and serine 2473. Positions 2415–3309 (DYSLKDRAPF…IQQDIDALNA (895 aa)) are required for late endosome/lysosome localization. An SHR-BD domain is found at 2766-3016 (LSVFSPYWLI…RLFAWADPTG (251 aa)). The interval 3310–3753 (ELMETSMTDM…VRLLRPQLPS (444 aa)) is required for lipid droplet localization. 2 positions are modified to omega-N-methylarginine: arginine 3519 and arginine 3526. Lysine 3538 carries the post-translational modification N6-acetyllysine. Phosphoserine is present on serine 3641.

The protein belongs to the VPS13 family. As to expression, widely expressed.

The protein resides in the mitochondrion outer membrane. The protein localises to the lipid droplet. It localises to the endoplasmic reticulum membrane. Its subcellular location is the lysosome membrane. It is found in the late endosome membrane. Mediates the transfer of lipids between membranes at organelle contact sites. Necessary for proper mitochondrial function and maintenance of mitochondrial transmembrane potential. Involved in the regulation of PINK1/PRKN-mediated mitophagy in response to mitochondrial depolarization. The polypeptide is Intermembrane lipid transfer protein VPS13C (Homo sapiens (Human)).